A 174-amino-acid polypeptide reads, in one-letter code: Sarcoplasmic calcium-binding protein (174 aa).

An N-acetylserine modification is found at S1. EF-hand domains lie at 3–38 (LWVQ…FAKE), 55–90 (GVWD…EAKS), 91–126 (VVEG…LGLD), and 127–160 (KTMA…FFMN). Residues D16, D18, D20, and D27 each coordinate Ca(2+). Positions 104, 106, 108, 110, 115, 138, 140, 142, and 149 each coordinate Ca(2+).

Like parvalbumins, SCPs seem to be more abundant in fast contracting muscles, but no functional relationship can be established from this distribution. This chain is Sarcoplasmic calcium-binding protein, found in Hediste diversicolor (Sandworm).